We begin with the raw amino-acid sequence, 396 residues long: MKILYYDCFSGISGDMHLGALVDLGVELEYLQKELAKLPLEGEYELSATTVSKSGIRATQVKVKLREHHHHDHRTFGNIRAMILSSALSLRIKERALKMFQKIAEAESRIHAKPLEQVAFHEVGAIDSIIDIVGSAIGLEALGVEKIYASRIELGGGFVRCAHGLLPVPAPATLEILQGLPIGLHGVPFEATTPTGAAILACNVDSFSGSLPLSPQKIGYGAGEREGVDIPNILRLILADEPVQPSPKEVLLETNIDDMSPEHLAYAVERLFEAGALDVYMTPITTKKNRLATKLSILSLLDKERELTQILFQETSSIGLRRLEVEKIALARRFIQVPTPWGEVSVKLSMQGEKVVRYKAEYEECRRLAMTHSVPLHTLYLAIDKAVESCLNDTNH.

It belongs to the LarC family.

The polypeptide is Putative nickel insertion protein (Wolinella succinogenes (strain ATCC 29543 / DSM 1740 / CCUG 13145 / JCM 31913 / LMG 7466 / NCTC 11488 / FDC 602W) (Vibrio succinogenes)).